Reading from the N-terminus, the 319-residue chain is Acetyl esterase (319 aa).

Positions 91 to 93 (HGG) match the Involved in the stabilization of the negatively charged intermediate by the formation of the oxyanion hole motif. Active-site residues include Ser-165, Asp-262, and His-292.

This sequence belongs to the 'GDXG' lipolytic enzyme family. Homodimer. Interacts with MalT and MelA.

The protein resides in the cytoplasm. Its function is as follows. Displays esterase activity towards short chain fatty esters (acyl chain length of up to 8 carbons). Able to hydrolyze triacetylglycerol (triacetin) and tributyrylglycerol (tributyrin), but not trioleylglycerol (triolein) or cholesterol oleate. Negatively regulates MalT activity by antagonizing maltotriose binding. Inhibits MelA galactosidase activity. This Escherichia coli O7:K1 (strain IAI39 / ExPEC) protein is Acetyl esterase.